We begin with the raw amino-acid sequence, 307 residues long: Leucine-rich repeat-containing protein 59 (307 aa).

Residues 1-247 lie on the Cytoplasmic side of the membrane; it reads MARANGRSQN…LAQRQSRLRK (247 aa). 5 LRR repeats span residues 10–31, 40–61, 63–84, 86–107, and 109–131; these read NLRD…SEVP, KATA…FCNL, HIVR…FGRL, NLQH…FAQL, and SLKW…AGDC. The stretch at 156 to 222 forms a coiled coil; the sequence is EIELQRKLQL…LNSNKKAEEE (67 aa). Residues 170–238 are disordered; it reads KKKLEAKQRV…RMATPKEKKL (69 aa). 2 stretches are compositionally biased toward basic and acidic residues: residues 174–187 and 194–238; these read EAKQ…EREM and QQKE…EKKL. The chain crosses the membrane as a helical span at residues 248–268; it reads IACILLFGLLVVLLVVVACRF. Residues 269–307 lie on the Lumenal side of the membrane; the sequence is TDLKAINMCTSVNAIYKETLSALHSNPVLERFLQDPSSQ.

Interacts with SGO1.

It localises to the microsome membrane. The protein resides in the endoplasmic reticulum membrane. It is found in the nucleus envelope. Its function is as follows. Required for nuclear import of FGF1. In Xenopus laevis (African clawed frog), this protein is Leucine-rich repeat-containing protein 59 (lrrc59).